A 706-amino-acid polypeptide reads, in one-letter code: Polyribonucleotide nucleotidyltransferase (706 aa).

The Mg(2+) site is built by Asp485 and Asp491. The KH domain maps to 552 to 611 (PRMLKMKIHPDKIREVIGSGGKTINKIIEDTGVKIDIENDGTIFIAAQTQEAGELALSII). One can recognise an S1 motif domain in the interval 621-689 (GDIFKGKVIK…QQGKVSLSRK (69 aa)).

Belongs to the polyribonucleotide nucleotidyltransferase family. Mg(2+) is required as a cofactor.

It localises to the cytoplasm. It carries out the reaction RNA(n+1) + phosphate = RNA(n) + a ribonucleoside 5'-diphosphate. Functionally, involved in mRNA degradation. Catalyzes the phosphorolysis of single-stranded polyribonucleotides processively in the 3'- to 5'-direction. The protein is Polyribonucleotide nucleotidyltransferase of Alkaliphilus oremlandii (strain OhILAs) (Clostridium oremlandii (strain OhILAs)).